The following is an 869-amino-acid chain: DNA mismatch repair protein MutS (869 aa).

Gly-619–Ser-626 contacts ATP.

Belongs to the DNA mismatch repair MutS family.

Its function is as follows. This protein is involved in the repair of mismatches in DNA. It is possible that it carries out the mismatch recognition step. This protein has a weak ATPase activity. The chain is DNA mismatch repair protein MutS from Caldanaerobacter subterraneus subsp. tengcongensis (strain DSM 15242 / JCM 11007 / NBRC 100824 / MB4) (Thermoanaerobacter tengcongensis).